We begin with the raw amino-acid sequence, 204 residues long: Protein XpaC (204 aa).

Its function is as follows. In double copy it causes aberrant cell morphology, filamentation and inhibits sporulation. Hydrolyzes 5-bromo-4-chloroindolyl phosphate. In Bacillus subtilis (strain 168), this protein is Protein XpaC (xpaC).